Consider the following 100-residue polypeptide: Aspartyl/glutamyl-tRNA(Asn/Gln) amidotransferase subunit C (100 aa).

This sequence belongs to the GatC family. As to quaternary structure, heterotrimer of A, B and C subunits.

The enzyme catalyses L-glutamyl-tRNA(Gln) + L-glutamine + ATP + H2O = L-glutaminyl-tRNA(Gln) + L-glutamate + ADP + phosphate + H(+). It carries out the reaction L-aspartyl-tRNA(Asn) + L-glutamine + ATP + H2O = L-asparaginyl-tRNA(Asn) + L-glutamate + ADP + phosphate + 2 H(+). Functionally, allows the formation of correctly charged Asn-tRNA(Asn) or Gln-tRNA(Gln) through the transamidation of misacylated Asp-tRNA(Asn) or Glu-tRNA(Gln) in organisms which lack either or both of asparaginyl-tRNA or glutaminyl-tRNA synthetases. The reaction takes place in the presence of glutamine and ATP through an activated phospho-Asp-tRNA(Asn) or phospho-Glu-tRNA(Gln). This Streptococcus pneumoniae serotype 19F (strain G54) protein is Aspartyl/glutamyl-tRNA(Asn/Gln) amidotransferase subunit C.